Consider the following 532-residue polypeptide: Putative cysteine ligase BshC (532 aa).

The stretch at 431–451 (MAQAKDALAKVDASLVEAAER) forms a coiled coil.

This sequence belongs to the BshC family.

The sequence is that of Putative cysteine ligase BshC from Koribacter versatilis (strain Ellin345).